The following is a 1179-amino-acid chain: Calcium-activated potassium channel subunit alpha-1 (1179 aa).

Residues 1–24 (MANGGGGGGGSSGGGGGGGGGGSG) are compositionally biased toward gly residues. A disordered region spans residues 1-62 (MANGGGGGGG…SSSSSSSSSV (62 aa)). Topologically, residues 1–87 (MANGGGGGGG…VPCDSRGQRM (87 aa)) are extracellular. The span at 41–61 (SSSSSSSSSSSSSSSSSSSSS) shows a compositional bias: low complexity. Residues 88-108 (WWAFLASSMVTFFGGLFIILL) traverse the membrane as a helical segment. Over 109–179 (WRTLKYLWTV…MISAQTLTGR (71 aa)) the chain is Cytoplasmic. Residues C119, C120, and C122 are each lipidated (S-palmitoyl cysteine). The helical transmembrane segment at 180 to 200 (VLVVLVFALSIGALVIYFIDS) threads the bilayer. The Extracellular portion of the chain corresponds to 201–215 (SNPIESCQNFYKDFT). Residues 216-236 (LQIDMAFNVFFLLYFGLRFIA) traverse the membrane as a helical segment. The Cytoplasmic segment spans residues 237–240 (ANDK). A helical transmembrane segment spans residues 241 to 261 (LWFWLEVNSVVDFFTVPPVFV). The Extracellular segment spans residues 262 to 265 (SVYL). The chain crosses the membrane as a helical; Voltage-sensor span at residues 266 to 286 (NRSWLGLRFLRALRLIQFSEI). Residues 287–301 (LQFLNILKTSNSIKL) are Cytoplasmic-facing. Residues 302–322 (VNLLSIFISTWLTAAGFIHLV) traverse the membrane as a helical segment. Residues 323-336 (ENSGDPWENFQNNQ) lie on the Extracellular side of the membrane. The segment at residues 337-359 (ALTYWECVYLLMVTMSTVGYGDV) is an intramembrane region (pore-forming). Positions 353-356 (TVGY) match the Selectivity for potassium motif. The Extracellular segment spans residues 360–368 (YAKTTLGRL). Residues 369–389 (FMVFFILGGLAMFASYVPEII) form a helical membrane-spanning segment. The Cytoplasmic segment spans residues 390–1179 (ELIGNRKKYG…KQKYVQEERL (790 aa)). The 143-residue stretch at 408 to 550 (RKHIVVCGHI…WNWKEGDDAI (143 aa)) folds into the RCK N-terminal 1 domain. Mg(2+) contacts are provided by E440, Q463, and E465. Residues 557 to 577 (LGFIAQSCLAQGLSTMLANLF) form a segment S7 region. The tract at residues 614–634 (LSFPTVCELCFVKLKLLMIAI) is segment S8. The tract at residues 678 to 682 (CKACH) is heme-binding motif. Residues 702–730 (EQPSTLSPKKKQRNGGMRNSPNSSPKLMR) are disordered. T706 bears the Phosphothreonine mark. S708, S721, and S725 each carry phosphoserine. The interval 780–800 (VLSGHVVVCIFGDVSSALIGL) is segment S9. Residues 782-926 (SGHVVVCIFG…MDRSSPDNSP (145 aa)) form the RCK N-terminal 2 domain. Phosphothreonine is present on T913. S921 and S925 each carry phosphoserine. Positions 946–968 (TELVNDTNVQFLDQDDDDDPDTE) match the Calcium bowl motif. Ca(2+)-binding residues include Q955, D958, D961, and D963. The tract at residues 975–995 (FACGTAFAVSVLDSLMSATYF) is segment S10. Low complexity predominate over residues 1129–1154 (RASLSHSSHSSQSSSKKSSSVHSIPS). The segment at 1129–1179 (RASLSHSSHSSQSSSKKSSSVHSIPSTANRQNRPKSRESRDKQKYVQEERL) is disordered. Residues 1163–1179 (KSRESRDKQKYVQEERL) show a composition bias toward basic and acidic residues. Residues S1164 and S1167 each carry the phosphoserine modification.

The protein belongs to the potassium channel family. Calcium-activated (TC 1.A.1.3) subfamily. KCa1.1/KCNMA1 sub-subfamily. In terms of assembly, homotetramer; which constitutes the calcium-activated potassium channel. Interacts with beta subunits KCNMB1, KCNMB2, KCNMB3 and KCNMB4. Interacts with gamma subunits LRRC26, LRRC38, LRRC52 and LRRC55. Beta and gamma subunits are accessory, and modulate its activity. Interacts with RAB11B. Phosphorylated. Phosphorylation by kinases such as PKA and/or PKG. In smooth muscles, phosphorylation affects its activity. Post-translationally, palmitoylation by ZDHHC22 and ZDHHC23 within the intracellular linker between the S0 and S1 transmembrane domains regulates localization to the plasma membrane. Depalmitoylated by LYPLA1 and LYPLAL1, leading to retard exit from the trans-Golgi network.

The protein resides in the cell membrane. Its subcellular location is the endoplasmic reticulum membrane. The catalysed reaction is K(+)(in) = K(+)(out). With respect to regulation, ethanol and carbon monoxide-bound heme increase channel activation. Heme inhibits channel activation. Its function is as follows. Potassium channel activated by both membrane depolarization or increase in cytosolic Ca(2+) that mediates export of K(+). It is also activated by the concentration of cytosolic Mg(2+). Its activation dampens the excitatory events that elevate the cytosolic Ca(2+) concentration and/or depolarize the cell membrane. It therefore contributes to repolarization of the membrane potential. Plays a key role in controlling excitability in a number of systems, such as regulation of the contraction of smooth muscle, the tuning of hair cells in the cochlea, regulation of transmitter release, and innate immunity. In smooth muscles, its activation by high level of Ca(2+), caused by ryanodine receptors in the sarcoplasmic reticulum, regulates the membrane potential. In cochlea cells, its number and kinetic properties partly determine the characteristic frequency of each hair cell and thereby helps to establish a tonotopic map. Kinetics of KCNMA1 channels are determined by alternative splicing, phosphorylation status and its combination with modulating beta subunits. Highly sensitive to both iberiotoxin (IbTx) and charybdotoxin (CTX). Functionally, potassium channel activated by both membrane depolarization or increase in cytosolic Ca(2+) that mediates export of K(+). This is Calcium-activated potassium channel subunit alpha-1 (KCNMA1) from Oryctolagus cuniculus (Rabbit).